Here is a 313-residue protein sequence, read N- to C-terminus: Intelectin-like protein (313 aa).

The 219-residue stretch at 33–251 folds into the Fibrinogen C-terminal domain; sequence TSCCSQTSPG…NNEKAPMALC (219 aa). Positions 86, 87, 89, 92, 97, 98, and 133 each coordinate Ca(2+). Disulfide bonds link Cys-94–Cys-280, Cys-199–Cys-259, and Cys-251–Cys-265. Residues Asn-260, Glu-262, Glu-274, and Asp-282 each coordinate Ca(2+). A carbohydrate is bound by residues 262–263 and Glu-274; that span reads EH.

As to quaternary structure, monomer, homodimer, homotrimer and homotetramer. Mostly monomeric or dimeric.

The protein localises to the secreted. Its function is as follows. Binds mannan, mannose and, to a lesser degree, D-lactose, N-acetylgalactosamine, N-acetylglucosamine and beta-D-glucose. This Alligator mississippiensis (American alligator) protein is Intelectin-like protein.